Reading from the N-terminus, the 100-residue chain is NADH-quinone oxidoreductase subunit K 2 (100 aa).

3 consecutive transmembrane segments (helical) span residues L4–L24, I28–A48, and I60–L80.

The protein belongs to the complex I subunit 4L family. In terms of assembly, NDH-1 is composed of 14 different subunits. Subunits NuoA, H, J, K, L, M, N constitute the membrane sector of the complex.

It localises to the cell inner membrane. The catalysed reaction is a quinone + NADH + 5 H(+)(in) = a quinol + NAD(+) + 4 H(+)(out). In terms of biological role, NDH-1 shuttles electrons from NADH, via FMN and iron-sulfur (Fe-S) centers, to quinones in the respiratory chain. The immediate electron acceptor for the enzyme in this species is believed to be ubiquinone. Couples the redox reaction to proton translocation (for every two electrons transferred, four hydrogen ions are translocated across the cytoplasmic membrane), and thus conserves the redox energy in a proton gradient. This chain is NADH-quinone oxidoreductase subunit K 2, found in Rhizobium etli (strain CIAT 652).